The sequence spans 658 residues: MSNLSVNAIRFLGIDAINKANSGHPGVVMGAAPMAYSLFTKQLHINPAQPNWINRDRFILSAGHGSMLLYALLHLSGFEDVSMDEIKSFRQWGSKTPGHPEFGHTAGIDATTGPLGQGISTATGFAQAERFLAAKYNREGYNIFDHYTYVICGDGDLMEGVSSEAASYAGLQKLDKLVVLYDSNDINLDGETKDSFTESVRDRYNAYGWHTALVENGTDLEAIHAAIETAKASGKPSLIEVKTVIGYGSPNKQGTNAVHGAPLGADETASTRQALGWDYEPFEIPEQVYADFKEHVADRGASAYQAWTKLVADYKEAHPELAAEVEAIIDGRDPVEVTPADFPALENGFSQATRNSSQDALNVVAAKLPTFLGGSADLAHSNMTYIKTDGLQDDANRLNRNIQFGVREFAMGTILNGMALHGGLRVYGGTFFVFSDYVKAAVRLSALQGLPVTYVFTHDSIAVGEDGPTHEPVEHLAGLRAMPNLNVFRPADARETQAAWYLAVTSEKTPTALVLTRQNLTVEDGTDFDKVAKGAYVVYENAADFDTILIATGSEVNLAVSAAKELASQGEKIRVVSMPSTDVFDKQDAAYKEEILPNAVRRRVAVEMGASQNWYKYVGLDGAVLGIDTFGASAPAPKVLAEYGFTVENLVKVVRNLK.

H24 lines the substrate pocket. Residues H64 and 113–115 (GPL) contribute to the thiamine diphosphate site. D154 provides a ligand contact to Mg(2+). Thiamine diphosphate contacts are provided by G155 and N184. Residues N184 and I186 each coordinate Mg(2+). Substrate contacts are provided by H259, R354, and S381. Residue H259 coordinates thiamine diphosphate. E408 functions as the Proton donor in the catalytic mechanism. F434 contributes to the thiamine diphosphate binding site. Residues H458, D466, and R517 each coordinate substrate.

Belongs to the transketolase family. As to quaternary structure, homodimer. The cofactor is Mg(2+). Ca(2+) is required as a cofactor. Requires Mn(2+) as cofactor. Co(2+) serves as cofactor. It depends on thiamine diphosphate as a cofactor.

The catalysed reaction is D-sedoheptulose 7-phosphate + D-glyceraldehyde 3-phosphate = aldehydo-D-ribose 5-phosphate + D-xylulose 5-phosphate. Necessary for high-efficiency recombination chromosomal DNA during genetic transformation. Functionally, catalyzes the transfer of a two-carbon ketol group from a ketose donor to an aldose acceptor, via a covalent intermediate with the cofactor thiamine pyrophosphate. This is Probable transketolase (tkt) from Streptococcus pneumoniae serotype 4 (strain ATCC BAA-334 / TIGR4).